A 778-amino-acid polypeptide reads, in one-letter code: Pentatricopeptide repeat-containing protein At3g09650, chloroplastic (778 aa).

A chloroplast-targeting transit peptide spans 1 to 65 (MNILRPPTSS…RSASGTANSS (65 aa)). PPR repeat units follow at residues 235 to 269 (DTAA…DCEP), 270 to 304 (DVLT…GIKV), and 305 to 339 (CMTT…RRDL). The segment at 351 to 381 (LKEKEEEEAEDDEDAFEDDEDSGYSARDEVS) is disordered. The span at 355-372 (EEEEAEDDEDAFEDDEDS) shows a compositional bias: acidic residues. PPR repeat units follow at residues 413-443 (DSRI…MRRQ), 451-485 (DEVT…GVPA), 486-521 (NRIT…GIEP), 522-556 (DVVS…GIAP), 557-587 (TKIS…MMND), 593-627 (DLIA…GFYP), and 628-658 (NVAT…IKER).

Belongs to the PPR family. P subfamily.

Its subcellular location is the plastid. The protein localises to the chloroplast stroma. In terms of biological role, involved in the processing of polycistronic chloroplast psbB-psbT-psbH-petB-petD transcript. Could bind RNA. The sequence is that of Pentatricopeptide repeat-containing protein At3g09650, chloroplastic (HCF152) from Arabidopsis thaliana (Mouse-ear cress).